The chain runs to 197 residues: Shikimate kinase (197 aa).

15-20 (GSGKSS) is an ATP binding site. Ser-19 is a Mg(2+) binding site. Substrate-binding residues include Asp-37, Arg-61, and Gly-83. Arg-121 serves as a coordination point for ATP. Arg-148 serves as a coordination point for substrate.

Belongs to the shikimate kinase family. As to quaternary structure, monomer. Mg(2+) serves as cofactor.

The protein resides in the cytoplasm. The enzyme catalyses shikimate + ATP = 3-phosphoshikimate + ADP + H(+). The protein operates within metabolic intermediate biosynthesis; chorismate biosynthesis; chorismate from D-erythrose 4-phosphate and phosphoenolpyruvate: step 5/7. Its function is as follows. Catalyzes the specific phosphorylation of the 3-hydroxyl group of shikimic acid using ATP as a cosubstrate. The polypeptide is Shikimate kinase (Chlorobium phaeovibrioides (strain DSM 265 / 1930) (Prosthecochloris vibrioformis (strain DSM 265))).